Reading from the N-terminus, the 192-residue chain is Pterin-4-alpha-carbinolamine dehydratase (192 aa).

The protein belongs to the pterin-4-alpha-carbinolamine dehydratase family.

The enzyme catalyses (4aS,6R)-4a-hydroxy-L-erythro-5,6,7,8-tetrahydrobiopterin = (6R)-L-erythro-6,7-dihydrobiopterin + H2O. The sequence is that of Pterin-4-alpha-carbinolamine dehydratase (Pcd) from Drosophila melanogaster (Fruit fly).